The chain runs to 432 residues: Methylenetetrahydrofolate--tRNA-(uracil-5-)-methyltransferase TrmFO (432 aa).

An FAD-binding site is contributed by 7-12 (GGGLAG).

It belongs to the MnmG family. TrmFO subfamily. It depends on FAD as a cofactor.

The protein resides in the cytoplasm. The enzyme catalyses uridine(54) in tRNA + (6R)-5,10-methylene-5,6,7,8-tetrahydrofolate + NADH + H(+) = 5-methyluridine(54) in tRNA + (6S)-5,6,7,8-tetrahydrofolate + NAD(+). It catalyses the reaction uridine(54) in tRNA + (6R)-5,10-methylene-5,6,7,8-tetrahydrofolate + NADPH + H(+) = 5-methyluridine(54) in tRNA + (6S)-5,6,7,8-tetrahydrofolate + NADP(+). Catalyzes the folate-dependent formation of 5-methyl-uridine at position 54 (M-5-U54) in all tRNAs. This chain is Methylenetetrahydrofolate--tRNA-(uracil-5-)-methyltransferase TrmFO, found in Coprothermobacter proteolyticus (strain ATCC 35245 / DSM 5265 / OCM 4 / BT).